A 157-amino-acid polypeptide reads, in one-letter code: S-ribosylhomocysteine lyase (157 aa).

3 residues coordinate Fe cation: His-54, His-58, and Cys-124.

Belongs to the LuxS family. In terms of assembly, homodimer. The cofactor is Fe cation.

It carries out the reaction S-(5-deoxy-D-ribos-5-yl)-L-homocysteine = (S)-4,5-dihydroxypentane-2,3-dione + L-homocysteine. In terms of biological role, involved in the synthesis of autoinducer 2 (AI-2) which is secreted by bacteria and is used to communicate both the cell density and the metabolic potential of the environment. The regulation of gene expression in response to changes in cell density is called quorum sensing. Catalyzes the transformation of S-ribosylhomocysteine (RHC) to homocysteine (HC) and 4,5-dihydroxy-2,3-pentadione (DPD). The polypeptide is S-ribosylhomocysteine lyase (Pediococcus pentosaceus (strain ATCC 25745 / CCUG 21536 / LMG 10740 / 183-1w)).